A 67-amino-acid polypeptide reads, in one-letter code: Bowman-Birk type proteinase inhibitor A6 (67 aa).

Intrachain disulfides connect Cys-9–Cys-66, Cys-10–Cys-29, Cys-13–Cys-62, Cys-16–Cys-27, Cys-36–Cys-43, and Cys-40–Cys-54.

Belongs to the Bowman-Birk serine protease inhibitor family. Expressed in bulb (at protein level).

Functionally, serine protease inhibitor. Strongly inhibits trypsin (Ki = 4 nM) and elastase (Ki = 4.8 nM). Also inhibits chymotrypsin with a Ki of 22 nM. Does not inhibit bacterial subtilisin. In Hyacinthus orientalis (Common hyacinth), this protein is Bowman-Birk type proteinase inhibitor A6.